The sequence spans 482 residues: tRNA(Ile)-lysidine synthase (482 aa).

28 to 33 (SGGPDS) contributes to the ATP binding site.

Belongs to the tRNA(Ile)-lysidine synthase family.

The protein localises to the cytoplasm. The enzyme catalyses cytidine(34) in tRNA(Ile2) + L-lysine + ATP = lysidine(34) in tRNA(Ile2) + AMP + diphosphate + H(+). Ligates lysine onto the cytidine present at position 34 of the AUA codon-specific tRNA(Ile) that contains the anticodon CAU, in an ATP-dependent manner. Cytidine is converted to lysidine, thus changing the amino acid specificity of the tRNA from methionine to isoleucine. In Symbiobacterium thermophilum (strain DSM 24528 / JCM 14929 / IAM 14863 / T), this protein is tRNA(Ile)-lysidine synthase.